Consider the following 138-residue polypeptide: Translation initiation factor 2 subunit beta (138 aa).

The protein belongs to the eIF-2-beta/eIF-5 family. As to quaternary structure, heterotrimer composed of an alpha, a beta and a gamma chain.

Functionally, eIF-2 functions in the early steps of protein synthesis by forming a ternary complex with GTP and initiator tRNA. The chain is Translation initiation factor 2 subunit beta from Methanopyrus kandleri (strain AV19 / DSM 6324 / JCM 9639 / NBRC 100938).